The sequence spans 425 residues: Decarboxylase flvG (425 aa).

The residue at position 82 (lysine 82) is an N6-(pyridoxal phosphate)lysine. Residues serine 213, glycine 250, and 281–284 (EPGR) each bind pyridoxal 5'-phosphate. 331-332 (FE) contributes to the substrate binding site. Cysteine 365 serves as the catalytic Proton donor; shared with dimeric partner. Residue aspartate 366 participates in substrate binding. Tyrosine 395 serves as a coordination point for pyridoxal 5'-phosphate.

Belongs to the Orn/Lys/Arg decarboxylase class-II family. Homodimer. Only the dimer is catalytically active, as the active sites are constructed of residues from both monomers. Requires pyridoxal 5'-phosphate as cofactor.

The protein resides in the cytoplasm. It carries out the reaction N(6),N(6)-dimethyl-L-lysine + H(+) = N,N-dimethyl-cadaverine + CO2. It functions in the pathway secondary metabolite biosynthesis; terpenoid biosynthesis. In terms of biological role, decarboxylase; part of the gene cluster that mediates the biosynthesis of flavunoidine, an alkaloidal terpenoid with a tetracyclic cage-like core connected to dimethylcadaverine via a C-N bond and acylated with 5,5-dimethyl-L-pipecolate. The tetracyclic core is synthesized by the terpene cyclase flvE and the cytochrome P450 monooxygenase flvD. The terpene cyclase flvE catalyzes the cyclization of farnesyl pyrophosphate (FPP) to form (1R,4R,5S)-(+)-acoradiene and the cytochrome P450 monooxygenase flvD is then responsible for oxidative conversion of (1R,4R,5S)-(+)-acoradiene into the tetracyclic cage present in the final product flavunoidine. In parallel, the N-methyltransferase flvH dimethylates L-lysine to give N,N-dimethyl-L-Lysin which is decarboxylated by flvG to afford dimethylcadaverine. The terpene cyclase-like protein flvF is the enzyme that attaches the dimethylcadaverine precusor at the C-7 of the tetracyclic cage to yield pre-flavunoidine. The cytochrome monooxygenase flvC hydroxylates the C-10 position of pre-flavunoidine whereas the NRPS flvI acylates the terpenoid core at the hydroxylated C-10 with dimethylpipecolate to yield final flavunoidine. The bifunctional enzyme flvA and the dehydrogenase flvB are responsible for the synthesis of the dimethylpipecolate precursor. The PLP-dependent lyase domain of flvA might use L-O-acetyl-homoserine and alpha-keto-isovalerate to form an intermediary ketone that can cyclize intramolecularly to yield an imine. The imine can be reduced by flvB to yield the 6-carboxylated pipecolate. The C-terminal alpha-KG-dependent oxygenase domain of flvA is then proposed to catalyze the decarboxylation to yield dimethylpipecolate. This chain is Decarboxylase flvG, found in Aspergillus flavus (strain ATCC 200026 / FGSC A1120 / IAM 13836 / NRRL 3357 / JCM 12722 / SRRC 167).